The chain runs to 317 residues: uncharacterized protein (317 aa).

Belongs to the asfivirus F317L family.

Its subcellular location is the virion. This is an uncharacterized protein from African swine fever virus (isolate Tick/South Africa/Pretoriuskop Pr4/1996) (ASFV).